The sequence spans 175 residues: Nucleoside triphosphate/diphosphate phosphatase (175 aa).

R23 (proton donor) is an active-site residue. Mg(2+) contacts are provided by N87, D103, D105, D107, D120, and E123.

It belongs to the Ntdp family. The cofactor is Mg(2+).

The enzyme catalyses a ribonucleoside 5'-triphosphate + H2O = a ribonucleoside 5'-diphosphate + phosphate + H(+). The catalysed reaction is a ribonucleoside 5'-diphosphate + H2O = a ribonucleoside 5'-phosphate + phosphate + H(+). Functionally, has nucleoside phosphatase activity towards nucleoside triphosphates and nucleoside diphosphates. In Listeria innocua serovar 6a (strain ATCC BAA-680 / CLIP 11262), this protein is Nucleoside triphosphate/diphosphate phosphatase.